Reading from the N-terminus, the 269-residue chain is Enoyl-[acyl-carrier-protein] reductase [NADH] (269 aa).

Residues 20 to 21, 64 to 65, and 95 to 96 each bind NAD(+); these read SI, DV, and IG. A substrate-binding site is contributed by Tyr-158. Positions 165 and 194 each coordinate NAD(+). The residue at position 266 (Thr-266) is a Phosphothreonine.

Belongs to the short-chain dehydrogenases/reductases (SDR) family. FabI subfamily. As to quaternary structure, homodimer. Homotetramer. Post-translationally, is phosphorylated in vivo. Phosphorylation on Thr-266 decreases enzymatic activity.

The protein localises to the secreted. The protein resides in the cell wall. The catalysed reaction is a 2,3-saturated acyl-[ACP] + NAD(+) = a (2E)-enoyl-[ACP] + NADH + H(+). It carries out the reaction a 2,3-saturated acyl-CoA + NAD(+) = a (2E)-enoyl-CoA + NADH + H(+). The enzyme catalyses (2E)-octenoyl-CoA + NADH + H(+) = octanoyl-CoA + NAD(+). It catalyses the reaction (2E)-dodecenoyl-CoA + NADH + H(+) = dodecanoyl-CoA + NAD(+). It functions in the pathway lipid metabolism; mycolic acid biosynthesis. Its activity is regulated as follows. InhA activity is controlled via phosphorylation: phosphorylation on Thr-266 decreases InhA activity and likely negatively regulates biosynthesis of mycolic acids and growth of the bacterium. InhA activity is likely inhibited by activated isoniazid, hexadecynoyl-CoA and octadecynoyl-CoA, which also block the biosynthesis of mycolic acids. The antitubercular pro-drug isoniazid (INH) is oxidatively activated by the catalase-peroxidase KatG and then covalently binds NAD to form an adduct that inhibits the activity of InhA. The inhibitory adduct is the isonicotinic-acyl-NADH where the isonicotinic-acyl group replaces the 4S (and not the 4R) hydrogen of NADH. Similarly, the antitubercular pro-drugs ethionamide (ETH) and prothionamide (PTH) are activated by the flavoprotein monooxygenase EthA, and forms an adduct with NAD (ETH-NAD and PTH-NAD, respectively) that is a tight-binding inhibitor of InhA. Enoyl-ACP reductase of the type II fatty acid syntase (FAS-II) system, which is involved in the biosynthesis of mycolic acids, a major component of mycobacterial cell walls. Catalyzes the NADH-dependent reduction of the double bond of 2-trans-enoyl-[acyl-carrier protein], an essential step in the fatty acid elongation cycle of the FAS-II pathway. Shows preference for long-chain fatty acyl thioester substrates (&gt;C16), and can also use 2-trans-enoyl-CoAs as alternative substrates. The mycobacterial FAS-II system utilizes the products of the FAS-I system as primers to extend fatty acyl chain lengths up to C56, forming the meromycolate chain that serves as the precursor for final mycolic acids. In terms of biological role, is the primary target of the first-line antitubercular drug isoniazid (INH) and of the second-line drug ethionamide (ETH). Overexpressed inhA confers INH and ETH resistance to M.smegmatis. The mechanism of isoniazid action against InhA is covalent attachment of the activated form of the drug to the nicotinamide ring of NAD and binding of the INH-NAD adduct to the active site of InhA. Similarly, the ETH-NAD adduct binds InhA. This is Enoyl-[acyl-carrier-protein] reductase [NADH] from Mycolicibacterium smegmatis (strain ATCC 700084 / mc(2)155) (Mycobacterium smegmatis).